A 473-amino-acid polypeptide reads, in one-letter code: Trehalose-6-phosphate synthase (473 aa).

R10 provides a ligand contact to D-glucose 6-phosphate. 21–22 (GG) is a binding site for UDP-alpha-D-glucose. D-glucose 6-phosphate contacts are provided by Y76 and D130. Residues R262 and K267 each contribute to the UDP-alpha-D-glucose site. R300 contributes to the D-glucose 6-phosphate binding site. Residues F339 and 365–369 (LVAKE) contribute to the UDP-alpha-D-glucose site.

Belongs to the glycosyltransferase 20 family. Homotetramer.

It carries out the reaction D-glucose 6-phosphate + UDP-alpha-D-glucose = alpha,alpha-trehalose 6-phosphate + UDP + H(+). It functions in the pathway glycan biosynthesis; trehalose biosynthesis. Probably involved in the osmoprotection via the biosynthesis of trehalose. Catalyzes the transfer of glucose from UDP-alpha-D-glucose (UDP-Glc) to D-glucose 6-phosphate (Glc-6-P) to form trehalose-6-phosphate. Acts with retention of the anomeric configuration of the UDP-sugar donor. This Salmonella arizonae (strain ATCC BAA-731 / CDC346-86 / RSK2980) protein is Trehalose-6-phosphate synthase (otsA).